Here is a 124-residue protein sequence, read N- to C-terminus: V-type proton ATPase subunit F (124 aa).

Belongs to the V-ATPase F subunit family. As to quaternary structure, V-ATPase is a heteromultimeric enzyme composed of a peripheral catalytic V1 complex (components A to H) attached to an integral membrane V0 proton pore complex (components: a, c, c', c'', d, e, f and VOA1).

The protein localises to the vacuole membrane. In terms of biological role, subunit of the V1 complex of vacuolar(H+)-ATPase (V-ATPase), a multisubunit enzyme composed of a peripheral complex (V1) that hydrolyzes ATP and a membrane integral complex (V0) that translocates protons. V-ATPase is responsible for acidifying and maintaining the pH of intracellular compartments. The sequence is that of V-type proton ATPase subunit F (vma-7) from Neurospora crassa (strain ATCC 24698 / 74-OR23-1A / CBS 708.71 / DSM 1257 / FGSC 987).